The primary structure comprises 884 residues: MTSTNDIRRSFLDYFGGAGHHIEPSAPLVPYNDPTLMFVNAGMVPFKNVFTGLEKRPYSTAASSQKCVRAGGKHNDLDNVGYTARHHTFFEMLGNFSFGDYFKEQAIHHAWTLITQTWGLAPEKLTATVYHTDDEAFDLWKKIAGLPDERIIRIPTSDNFWSMGDTGPCGPCSEIFYDHGDHVRGGPPGSPEEDGDRFVEIWNLVFMQYEQLPGGERVDLPRPSIDTGMGLERVAAVLQGVHDNYDTDTFKALIEASVELTGVRADEAHRASHRVIADHLRASSFLVADGVLPSNEGRGYVLRRIMRRAMRHAHLLGAKDPLMHRLLPSLTAEMGAAYPELIRAQPLIAETLEREEVKFRQTLDKGLRLLDEATADMGRGDTLVGDVAFKLYDTYGFPYDLTEDALRSKGISVDRAGFDAAMAQQKAAARAAWKGSGQKASEEIWFDLAETHGSTEFTGYTSTSGEATVIALVRDGQPVEEARAGDEVIVLTNQTPFYGESGGQMGDAGMIATLEGAKASVSDTGKPLGRLHTHQAKLEAGTLKVGDTVQLTVDAERRDRIRANHSATHLLHAALRNRLGGHVTQKGSLVAADRFRFDFSHPKALTAAEIADIEADVNAQIRGNEPVTTRLMTPDDAIAAGALALFGEKYGDEVRVLAMGKADDRNYSVELCGGTHVRALGDIALFKIVSESAVSSGVRRIEALTGEAARQWLNGRDEALKAAAAALKTSPDEVPARVAQLAEQLKKAERELADAKKALALGGSGGDGGAAAGPAVEQVGDVAFLAQVVDGLDPKELRGTVDGLKKQVGSGVAMLVAVNDGRASVAVGVTDDKTGHHSAVDLVKAAVVALGGQGGGGRPDMAQGGGPNGGAANDAVAAVKAALA.

Residues His565, His569, Cys672, and His676 each contribute to the Zn(2+) site.

This sequence belongs to the class-II aminoacyl-tRNA synthetase family. Requires Zn(2+) as cofactor.

Its subcellular location is the cytoplasm. The enzyme catalyses tRNA(Ala) + L-alanine + ATP = L-alanyl-tRNA(Ala) + AMP + diphosphate. Its function is as follows. Catalyzes the attachment of alanine to tRNA(Ala) in a two-step reaction: alanine is first activated by ATP to form Ala-AMP and then transferred to the acceptor end of tRNA(Ala). Also edits incorrectly charged Ser-tRNA(Ala) and Gly-tRNA(Ala) via its editing domain. The protein is Alanine--tRNA ligase of Sphingopyxis alaskensis (strain DSM 13593 / LMG 18877 / RB2256) (Sphingomonas alaskensis).